Consider the following 227-residue polypeptide: 6-phosphogluconolactonase (227 aa).

This sequence belongs to the glucosamine/galactosamine-6-phosphate isomerase family. 6-phosphogluconolactonase subfamily.

The catalysed reaction is 6-phospho-D-glucono-1,5-lactone + H2O = 6-phospho-D-gluconate + H(+). It functions in the pathway carbohydrate degradation; pentose phosphate pathway; D-ribulose 5-phosphate from D-glucose 6-phosphate (oxidative stage): step 2/3. Functionally, hydrolysis of 6-phosphogluconolactone to 6-phosphogluconate. This is 6-phosphogluconolactonase (pgl) from Helicobacter pylori (strain ATCC 700392 / 26695) (Campylobacter pylori).